We begin with the raw amino-acid sequence, 397 residues long: Elongation factor Tu (397 aa).

The tr-type G domain occupies 10 to 207 (KPHCNIGTIG…AVDEWIPQPE (198 aa)). Residues 19–26 (GHVDHGKT) form a G1 region. Position 19-26 (19-26 (GHVDHGKT)) interacts with GTP. Thr26 provides a ligand contact to Mg(2+). The segment at 61–65 (GITIS) is G2. The tract at residues 82–85 (DCPG) is G3. GTP contacts are provided by residues 82–86 (DCPGH) and 137–140 (NKVD). Residues 137-140 (NKVD) form a G4 region. Residues 175 to 177 (SAL) are G5.

This sequence belongs to the TRAFAC class translation factor GTPase superfamily. Classic translation factor GTPase family. EF-Tu/EF-1A subfamily. As to quaternary structure, monomer.

Its subcellular location is the cytoplasm. The enzyme catalyses GTP + H2O = GDP + phosphate + H(+). Its function is as follows. GTP hydrolase that promotes the GTP-dependent binding of aminoacyl-tRNA to the A-site of ribosomes during protein biosynthesis. This Sphingopyxis alaskensis (strain DSM 13593 / LMG 18877 / RB2256) (Sphingomonas alaskensis) protein is Elongation factor Tu.